The chain runs to 310 residues: 4-hydroxythreonine-4-phosphate dehydrogenase (310 aa).

Thr-129 is a substrate binding site. Residues His-158, His-202, and His-250 each contribute to the a divalent metal cation site. Residues Lys-258, Asn-267, and Arg-276 each contribute to the substrate site.

Belongs to the PdxA family. Homodimer. The cofactor is a divalent metal cation.

The protein resides in the cytoplasm. The catalysed reaction is 4-(phosphooxy)-L-threonine + NAD(+) = 3-amino-2-oxopropyl phosphate + CO2 + NADH. Its pathway is cofactor biosynthesis; pyridoxine 5'-phosphate biosynthesis; pyridoxine 5'-phosphate from D-erythrose 4-phosphate: step 4/5. In terms of biological role, catalyzes the NAD(P)-dependent oxidation of 4-(phosphooxy)-L-threonine (HTP) into 2-amino-3-oxo-4-(phosphooxy)butyric acid which spontaneously decarboxylates to form 3-amino-2-oxopropyl phosphate (AHAP). This is 4-hydroxythreonine-4-phosphate dehydrogenase from Hydrogenobaculum sp. (strain Y04AAS1).